The sequence spans 140 residues: NADH-quinone oxidoreductase subunit I (140 aa).

4Fe-4S ferredoxin-type domains are found at residues Gly-42 to Ile-71 and Ala-81 to Glu-110. [4Fe-4S] cluster is bound by residues Cys-51, Cys-54, Cys-57, Cys-61, Cys-90, Cys-93, Cys-96, and Cys-100.

The protein belongs to the complex I 23 kDa subunit family. NDH-1 is composed of 14 different subunits. Subunits NuoA, H, J, K, L, M, N constitute the membrane sector of the complex. It depends on [4Fe-4S] cluster as a cofactor.

The protein localises to the cell membrane. The enzyme catalyses a quinone + NADH + 5 H(+)(in) = a quinol + NAD(+) + 4 H(+)(out). NDH-1 shuttles electrons from NADH, via FMN and iron-sulfur (Fe-S) centers, to quinones in the respiratory chain. The immediate electron acceptor for the enzyme in this species is believed to be ubiquinone. Couples the redox reaction to proton translocation (for every two electrons transferred, four hydrogen ions are translocated across the cytoplasmic membrane), and thus conserves the redox energy in a proton gradient. The chain is NADH-quinone oxidoreductase subunit I from Carboxydothermus hydrogenoformans (strain ATCC BAA-161 / DSM 6008 / Z-2901).